The primary structure comprises 195 residues: Thioredoxin reductase-like selenoprotein T (195 aa).

The first 19 residues, 1–19 (MRLLLLLLVAASAVVRSDA), serve as a signal peptide directing secretion. The cysteinyl-selenocysteine (Cys-Sec) cross-link spans 46–49 (CVSU). Position 49 (Sec49) is a non-standard amino acid, selenocysteine. A helical transmembrane segment spans residues 85 to 103 (IASFLSVFKLVLIGLIIVG).

Belongs to the SelWTH family. Selenoprotein T subfamily. May contain a selenide-sulfide bond between Cys-46 and Sec-49. This bond is speculated to serve as redox-active pair.

It localises to the endoplasmic reticulum membrane. It carries out the reaction [thioredoxin]-dithiol + NADP(+) = [thioredoxin]-disulfide + NADPH + H(+). Functionally, selenoprotein with thioredoxin reductase-like oxidoreductase activity. Protects dopaminergic neurons against oxidative stress and cell death. Involved in ADCYAP1/PACAP-induced calcium mobilization and neuroendocrine secretion. Plays a role in fibroblast anchorage and redox regulation. In gastric smooth muscle, modulates the contraction processes through the regulation of calcium release and MYLK activation. In pancreatic islets, involved in the control of glucose homeostasis, contributes to prolonged ADCYAP1/PACAP-induced insulin secretion. This is Thioredoxin reductase-like selenoprotein T from Bos taurus (Bovine).